The chain runs to 268 residues: Trypsin-like protease (268 aa).

The first 41 residues, 1 to 41, serve as a signal peptide directing secretion; sequence MTHTTTIAAKRGGLALAKKAAAAGAVALAVASLQPVSAAHA. A propeptide spans 42-45 (activation peptide); that stretch reads ADAR. The Peptidase S1 domain maps to 46–266; sequence VIGGKPAAQN…FAKDIAKAAS (221 aa). A disulfide bridge connects residues Cys67 and Cys83. Residues His82 and Asp127 each act as charge relay system in the active site. 2 disulfides stabilise this stretch: Cys187-Cys202 and Cys213-Cys242. Ser217 serves as the catalytic Charge relay system.

It belongs to the peptidase S1 family.

In terms of biological role, protease that shows preferential cleavage after Arg and Lys residues. The protein is Trypsin-like protease of Streptomyces glaucescens.